A 450-amino-acid polypeptide reads, in one-letter code: Phosphoglucosamine mutase (450 aa).

Serine 101 functions as the Phosphoserine intermediate in the catalytic mechanism. Residues serine 101, aspartate 240, aspartate 242, and aspartate 244 each contribute to the Mg(2+) site. Serine 101 bears the Phosphoserine mark.

The protein belongs to the phosphohexose mutase family. It depends on Mg(2+) as a cofactor. Post-translationally, activated by phosphorylation.

The catalysed reaction is alpha-D-glucosamine 1-phosphate = D-glucosamine 6-phosphate. Its function is as follows. Catalyzes the conversion of glucosamine-6-phosphate to glucosamine-1-phosphate. In Streptococcus pneumoniae (strain Hungary19A-6), this protein is Phosphoglucosamine mutase.